The following is a 104-amino-acid chain: Phosphoribosyl-ATP pyrophosphatase (104 aa).

This sequence belongs to the PRA-PH family.

Its subcellular location is the cytoplasm. It catalyses the reaction 1-(5-phospho-beta-D-ribosyl)-ATP + H2O = 1-(5-phospho-beta-D-ribosyl)-5'-AMP + diphosphate + H(+). Its pathway is amino-acid biosynthesis; L-histidine biosynthesis; L-histidine from 5-phospho-alpha-D-ribose 1-diphosphate: step 2/9. The protein is Phosphoribosyl-ATP pyrophosphatase (hisE) of Methanosarcina acetivorans (strain ATCC 35395 / DSM 2834 / JCM 12185 / C2A).